A 313-amino-acid chain; its full sequence is Thymidylate synthase (313 aa).

The segment at 1 to 28 (MPVAGSELPRRPLPPAAQERDAEPRPPH) is disordered. Residues 18-28 (QERDAEPRPPH) show a composition bias toward basic and acidic residues. Arg50 lines the dUMP pocket. Position 114 is a phosphoserine (Ser114). DUMP contacts are provided by residues 175–176 (RR), 195–196 (CH), 215–218 (RSGD), Asn226, and 256–258 (HIY). The Nucleophile role is filled by Cys195. A (6R)-5,10-methylene-5,6,7,8-tetrahydrofolate-binding site is contributed by Asp218. Residues Lys287, Lys292, and Lys308 each participate in a glycyl lysine isopeptide (Lys-Gly) (interchain with G-Cter in SUMO2) cross-link. Ala312 lines the (6R)-5,10-methylene-5,6,7,8-tetrahydrofolate pocket.

This sequence belongs to the thymidylate synthase family. Homodimer.

It is found in the nucleus. The protein resides in the cytoplasm. Its subcellular location is the mitochondrion. The protein localises to the mitochondrion matrix. It localises to the mitochondrion inner membrane. The catalysed reaction is dUMP + (6R)-5,10-methylene-5,6,7,8-tetrahydrofolate = 7,8-dihydrofolate + dTMP. It functions in the pathway pyrimidine metabolism; dTTP biosynthesis. Catalyzes the reductive methylation of 2'-deoxyuridine 5'-monophosphate (dUMP) to thymidine 5'-monophosphate (dTMP), using the cosubstrate, 5,10- methylenetetrahydrofolate (CH2H4folate) as a 1-carbon donor and reductant and contributes to the de novo mitochondrial thymidylate biosynthesis pathway. The protein is Thymidylate synthase of Homo sapiens (Human).